Reading from the N-terminus, the 982-residue chain is Zinc finger and BTB domain-containing protein 4 (982 aa).

A BTB domain is found at 30-131 (CDVTLIAGDT…IYSARLALPG (102 aa)). K40 participates in a covalent cross-link: Glycyl lysine isopeptide (Lys-Gly) (interchain with G-Cter in SUMO2). The disordered stretch occupies residues 71–103 (TGGSAPSPATTTAASSSSSSPPPASPHSSSPPR). Positions 74–89 (SAPSPATTTAASSSSS) are enriched in low complexity. The tract at residues 165–324 (VPPAPTSMVT…CRYCEKVFAL (160 aa)) is interaction with CBFA2T3. The segment at 210–232 (FPCPRCGKSFIHPKRLQTHEAQC) adopts a C2H2-type 1; atypical zinc-finger fold. Positions 234-255 (RGSNTRGSAGLGPGVSGSGGPA) are disordered. The segment covering 242-255 (AGLGPGVSGSGGPA) has biased composition (gly residues). 3 consecutive C2H2-type zinc fingers follow at residues 285-307 (YVCA…SNVH), 313-335 (YPCR…EVWH), and 341-364 (YQCI…RAFH). S367 carries the post-translational modification Phosphoserine. The disordered stretch occupies residues 404-578 (KTYSQGAPEA…QLQAPPPLCQ (175 aa)). Residues 430–446 (SPQPLPPPAPEPGPPPS) show a composition bias toward pro residues. Residues 467-477 (AAGGGPAGTGG) show a composition bias toward gly residues. Low complexity-rich tracts occupy residues 478 to 488 (SQAASVITYTT) and 507 to 529 (ATPT…ATAT). Residue K548 forms a Glycyl lysine isopeptide (Lys-Gly) (interchain with G-Cter in SUMO2) linkage. Positions 552-565 (GLSGSGGSPTGTGR) are enriched in gly residues. A Glycyl lysine isopeptide (Lys-Gly) (interchain with G-Cter in SUMO2) cross-link involves residue K590. Basic and acidic residues predominate over residues 591-600 (RRISETDLRP). Disordered stretches follow at residues 591–700 (RRIS…ERRH), 715–738 (LRKH…SSTR), 759–839 (QRHA…GGGS), and 854–880 (GGSR…GDRM). Over residues 604-627 (SGEEVEESEEEEEEEEEEDQEEQE) the composition is skewed to acidic residues. Positions 628–637 (ESKAGGEDQL) are enriched in basic and acidic residues. C2H2-type zinc fingers lie at residues 700–722 (HRCG…QEAH) and 739–761 (FTCP…GQRH). T769 and T771 each carry phosphothreonine; by HIPK2. Positions 799-820 (SSSSGEAGSGSAAAAEASESAS) are enriched in low complexity. A Phosphothreonine; by HIPK2 modification is found at T953.

In terms of assembly, interacts with HIPK2. Interacts with CBFA2T3. Interacts with ZBTB38. Post-translationally, phosphorylated by HIPK2. This phosphorylation reduces stability and triggers ZBTB4 protein degradation in response to DNA damage. Expressed in adult and aged myogenic satellite cells.

The protein resides in the nucleus. It is found in the chromosome. In terms of biological role, transcriptional repressor with bimodal DNA-binding specificity. Represses transcription in a methyl-CpG-dependent manner. Binds with a higher affinity to methylated CpG dinucleotides in the consensus sequence 5'-CGCG-3' but can also bind to the non-methylated consensus sequence 5'-CTGCNA-3' also known as the consensus kaiso binding site (KBS). Can also bind specifically to a single methyl-CpG pair and can bind hemimethylated DNA but with a lower affinity compared to methylated DNA. Plays a role in postnatal myogenesis, may be involved in the regulation of satellite cells self-renewal. This is Zinc finger and BTB domain-containing protein 4 (Zbtb4) from Mus musculus (Mouse).